The primary structure comprises 472 residues: SURF6 homolog gldi-11 (472 aa).

4 disordered regions span residues 53-73 (LSKK…AKGL), 89-232 (KSKQ…SPEI), 249-350 (KVER…DRAL), and 414-472 (LVKK…GRIL). The segment covering 95-106 (KVQPQKVVAPVK) has biased composition (low complexity). Residues 107–132 (RPADQNKNKEKVVKKDQKKQDKKADS) show a composition bias toward basic and acidic residues. Over residues 133 to 150 (DSEEDDSSDDEEKEETDE) the composition is skewed to acidic residues. Residues 151-160 (PVAKKQKKEE) are compositionally biased toward basic and acidic residues. Acidic residues-rich tracts occupy residues 161 to 175 (SSDD…EEPE) and 182 to 194 (EAED…EEEE). A compositionally biased stretch (polar residues) spans 197 to 210 (SKPNKTVAQSTLKS). The span at 212–221 (GKIDKEIQKL) shows a compositional bias: basic and acidic residues. Over residues 274-285 (LKRRESKLKLKQ) the composition is skewed to basic residues. Positions 286–305 (RRAEEKKGKEAAAQVKKETV) are enriched in basic and acidic residues. A compositionally biased stretch (basic residues) spans 414-426 (LVKKNKMKDRRKQ). Residues 427–443 (KWENRENKTEGEKQTKQ) are compositionally biased toward basic and acidic residues. The span at 459–472 (KRKMNKLRNKGRIL) shows a compositional bias: basic residues.

This sequence belongs to the SURF6 family.

It localises to the nucleus. It is found in the nucleoplasm. Its function is as follows. Binds to both DNA and RNA in vitro, with a stronger binding capacity for RNA. May represent a nucleolar constitutive protein involved in ribosomal biosynthesis or assembly. This is SURF6 homolog gldi-11 from Caenorhabditis elegans.